A 385-amino-acid chain; its full sequence is Cytochrome b (385 aa).

The next 4 helical transmembrane spans lie at 32 to 52 (LGSL…FMAM), 76 to 98 (WLLR…MHIA), 113 to 133 (VWIV…LGYC), and 179 to 199 (FFAL…MHFM). Heme b contacts are provided by H82 and H96. The heme b site is built by H183 and H197. H202 is an a ubiquinone binding site. The next 4 membrane-spanning stretches (helical) occupy residues 225–245 (FIFK…LFVF), 289–309 (LLGV…PITD), 321–341 (LSKF…QIGQ), and 348–368 (FVLM…IIVP).

The protein belongs to the cytochrome b family. As to quaternary structure, fungal cytochrome b-c1 complex contains 10 subunits; 3 respiratory subunits, 2 core proteins and 5 low-molecular weight proteins. Cytochrome b-c1 complex is a homodimer. Heme b is required as a cofactor.

It localises to the mitochondrion inner membrane. Component of the ubiquinol-cytochrome c reductase complex (complex III or cytochrome b-c1 complex) that is part of the mitochondrial respiratory chain. The b-c1 complex mediates electron transfer from ubiquinol to cytochrome c. Contributes to the generation of a proton gradient across the mitochondrial membrane that is then used for ATP synthesis. This Candida glabrata (strain ATCC 2001 / BCRC 20586 / JCM 3761 / NBRC 0622 / NRRL Y-65 / CBS 138) (Yeast) protein is Cytochrome b (COB).